The following is a 386-amino-acid chain: Lycopene beta-cyclase (386 aa).

Residue 4–34 (DVLLAGAGLANGLIALALRAARPDLRVLLLD) participates in NAD(+) binding.

The protein belongs to the lycopene cyclase family. FAD serves as cofactor.

It carries out the reaction a carotenoid psi-end group = a carotenoid beta-end derivative. It catalyses the reaction all-trans-lycopene = gamma-carotene. The catalysed reaction is gamma-carotene = all-trans-beta-carotene. Its pathway is carotenoid biosynthesis; astaxanthin biosynthesis. Functionally, catalyzes the double cyclization reaction which converts lycopene to beta-carotene. In Paracoccus sp. (strain N81106 / MBIC 01143) (Agrobacterium aurantiacum), this protein is Lycopene beta-cyclase.